The chain runs to 597 residues: Putative lipase ATG15 (597 aa).

The Cytoplasmic segment spans residues 1–15; sequence MTLEKNRHANKGTSW. The helical; Signal-anchor for type II membrane protein transmembrane segment at 16–36 threads the bilayer; it reads TWMIYKFVVGVITVAILVLFI. Topologically, residues 37–597 are lumenal; sequence TQKSVSQAQD…DDDEDTFERK (561 aa). N-linked (GlcNAc...) asparagine glycans are attached at residues Asn195, Asn262, and Asn346. The active-site Charge relay system is Ser364. An N-linked (GlcNAc...) asparagine glycan is attached at Asn481. The interval 507–570 is disordered; it reads EKDEPKLPNP…PTDQDPPKKC (64 aa). Low complexity predominate over residues 519-554; the sequence is SSSKSTLSTKTTSLKSSSTYSGSTSSSTVTKTTQTS.

The protein belongs to the AB hydrolase superfamily. Lipase family. In terms of assembly, binds to both phosphatidylinositol (PI) and phosphatidylinositol 3,5-bisphosphate (PIP2).

It is found in the endosome. The protein resides in the multivesicular body membrane. Its subcellular location is the prevacuolar compartment membrane. The enzyme catalyses a triacylglycerol + H2O = a diacylglycerol + a fatty acid + H(+). Lipase which is essential for lysis of subvacuolar cytoplasm to vacuole targeted bodies and intravacuolar autophagic bodies. Involved in the lysis of intravacuolar multivesicular body (MVB) vesicles. The intravacuolar membrane disintegration by ATG15 is critical to life span extension. This Candida albicans (strain SC5314 / ATCC MYA-2876) (Yeast) protein is Putative lipase ATG15 (ATG15).